Consider the following 83-residue polypeptide: Keratin-associated protein 6-1 (83 aa).

The RPT 1-1 repeat unit spans residues 9 to 15 (YGGLGCG). The RPT 1-2 repeat unit spans residues 19–25 (YGGLGCG). Residues 44 to 55 (GYGYGSRSLCGS) form an RPT 2-1 repeat. One copy of the RPT 2-2 repeat lies at 56–67 (GYGYGSRSLCGS).

The protein belongs to the KRTAP type 6 family. As to quaternary structure, interacts with wool keratins.

In the wool cortex, wool keratin intermediate filaments are embedded in an interfilamentous matrix, consisting of hair keratin-associated proteins (KRTAP), which are essential for the formation of a rigid and resistant wool shaft through their extensive disulfide bond cross-linking with abundant cysteine residues of wool keratins. The matrix proteins include the high-sulfur and high-glycine-tyrosine keratins. This chain is Keratin-associated protein 6-1 (KRTAP6-1), found in Ovis aries (Sheep).